Consider the following 358-residue polypeptide: Peptide chain release factor 1 (358 aa).

Glutamine 237 is subject to N5-methylglutamine.

This sequence belongs to the prokaryotic/mitochondrial release factor family. Post-translationally, methylated by PrmC. Methylation increases the termination efficiency of RF1.

The protein localises to the cytoplasm. Its function is as follows. Peptide chain release factor 1 directs the termination of translation in response to the peptide chain termination codons UAG and UAA. The protein is Peptide chain release factor 1 of Streptomyces griseus subsp. griseus (strain JCM 4626 / CBS 651.72 / NBRC 13350 / KCC S-0626 / ISP 5235).